The primary structure comprises 312 residues: Short chain dehydrogenase pgmD (312 aa).

Residues Val-46, Ile-47, Lys-171, Tyr-207, Lys-211, and Thr-242 each contribute to the NADP(+) site. Residue Tyr-207 is the Proton donor of the active site. Lys-211 (lowers pKa of active site Tyr) is an active-site residue.

It belongs to the short-chain dehydrogenases/reductases (SDR) family.

It participates in pigment biosynthesis. It functions in the pathway secondary metabolite biosynthesis. Its function is as follows. Short chain dehydrogenase; part of the gene cluster that mediates the biosynthesis of pleosporalin A, ascomycone A, as well as a third cryptic naphthoquinone derived pigment, all responsible for the coloration of conidia. Essential for the production of pleosporalin A, but not the 2 other final products. The pathway begins with the biosynthesis of the cyclized heptaketide 3-acetonyl-1,6,8-trihydroxy-2-naphthaldehyde by the NR-PKS pgmA. The C-6 hydroxyl group is further methylated by the O-methyltransferase pgmB to yield fusarubinaldehyde which is in turn oxidized by the cytochrome P450 monooxygenase pgmC at C-9. The C-1 hydroxyl group is then methylated spontaneously. Although pgmE, pgmD and pgmH are essential for the production of pleosporalin A, it is not the case for the 2 other final products and it remains difficult to assign a specific function to each enzyme. PgmF and pgmG seem not to be involved in pigment biosynthesis although they were regulated by the cluster-specific transcription factor pgmR. The chain is Short chain dehydrogenase pgmD from Aspergillus terreus (strain NIH 2624 / FGSC A1156).